Consider the following 441-residue polypeptide: Chromatin structure-remodeling complex subunit SFH1 (441 aa).

The segment covering 124 to 137 (DFDANDFEDDDDDD) has biased composition (acidic residues). Disordered regions lie at residues 124-183 (DFDA…AAPP) and 383-407 (EMTPEEMQKREMERDRSSRRLKRES). Composition is skewed to basic and acidic residues over residues 138–147 (QSQRESRDGS) and 155–166 (DGTKKEEQDKFA).

This sequence belongs to the SNF5 family.

It localises to the nucleus. In terms of biological role, part of the chromatin structure-remodeling complex (RSC) which is involved in transcription regulation and nucleosome positioning. RSC is responsible for the transfer of a histone octamer from a nucleosome core particle to naked DNA. The reaction requires ATP and involves an activated RSC-nucleosome intermediate. Remodeling reaction also involves DNA translocation, DNA twist and conformational change. As a reconfigurer of centromeric and flanking nucleosomes, RSC complex is required both for proper kinetochore function in chromosome segregation and, via a PKC1-dependent signaling pathway, for organization of the cellular cytoskeleton. This subunit is essential for mitotic growth and required for cell cycle progression. This chain is Chromatin structure-remodeling complex subunit SFH1 (SFH1), found in Yarrowia lipolytica (strain CLIB 122 / E 150) (Yeast).